The following is a 519-amino-acid chain: Serine/threonine-protein kinase RIO1 (519 aa).

A compositionally biased stretch (pro residues) spans 1–10; that stretch reads MTPAPEPQDP. The interval 1-54 is disordered; the sequence is MTPAPEPQDPPTIHEPVATEQTDDISDWDVESDYEDGYGAPSKSQAQGGASAAD. Positions 21 to 36 are enriched in acidic residues; that stretch reads QTDDISDWDVESDYED. The span at 39 to 53 shows a compositional bias: low complexity; it reads GAPSKSQAQGGASAA. One can recognise a Protein kinase domain in the interval 122-519; sequence SEIYGTISTG…KLVAANKKRK (398 aa). ATP contacts are provided by Lys154 and Leu228. The Proton acceptor role is filled by Asp281. Asn286 and Asp298 together coordinate Mg(2+). Residue Asp298 is the 4-aspartylphosphate intermediate of the active site. The segment at 418–519 is disordered; sequence ADSKVPESTG…KLVAANKKRK (102 aa). Residues 439-464 are compositionally biased toward acidic residues; the sequence is GSEDEEGDEGESGEVESGDEEREEGE. The tract at residues 440–519 is association with (pre-)40S ribosomal particle; it reads SEDEEGDEGE…KLVAANKKRK (80 aa). Basic residues-rich tracts occupy residues 470 to 489 and 497 to 519; these read KKRP…AHKM and EKRK…KKRK.

This sequence belongs to the protein kinase superfamily. RIO-type Ser/Thr kinase family. Mg(2+) serves as cofactor. In terms of processing, autophosphorylated.

Its subcellular location is the cytoplasm. The enzyme catalyses L-seryl-[protein] + ATP = O-phospho-L-seryl-[protein] + ADP + H(+). It carries out the reaction L-threonyl-[protein] + ATP = O-phospho-L-threonyl-[protein] + ADP + H(+). It catalyses the reaction ATP + H2O = ADP + phosphate + H(+). Functionally, involved in the final steps of cytoplasmic maturation of the 40S ribosomal subunit. In vitro, has strong ATPase activity and only low protein kinase activity. This is Serine/threonine-protein kinase RIO1 from Chaetomium thermophilum (strain DSM 1495 / CBS 144.50 / IMI 039719) (Thermochaetoides thermophila).